A 476-amino-acid chain; its full sequence is Bridging integrator 2 (476 aa).

Positions 26-242 constitute a BAR domain; it reads VLQKLGKTVE…MGKLDKQHSS (217 aa). Disordered regions lie at residues 269-369 and 395-476; these read YPCP…TEGA and GAAP…LTPL. A compositionally biased stretch (polar residues) spans 279–292; sequence EPSSGAEQTPTSPR. Positions 310–324 are enriched in pro residues; that stretch reads PAEPGAPMPGPPPAS. Low complexity predominate over residues 325–339; the sequence is PTSVRSASESESECS. Residues 340–353 are compositionally biased toward basic and acidic residues; that stretch reads GESREIDLSPKEME. The segment covering 461 to 476 has biased composition (polar residues); sequence VSCNPPQDPSESLTPL.

Its subcellular location is the cytoplasm. The protein is Bridging integrator 2 (BIN2) of Gallus gallus (Chicken).